Here is a 248-residue protein sequence, read N- to C-terminus: Triosephosphate isomerase (248 aa).

Substrate is bound at residue 9-11 (NWK). The Electrophile role is filled by histidine 92. Catalysis depends on glutamate 164, which acts as the Proton acceptor. Residues glycine 170, serine 209, and 230–231 (GG) each bind substrate.

This sequence belongs to the triosephosphate isomerase family. Homodimer.

It is found in the cytoplasm. The enzyme catalyses D-glyceraldehyde 3-phosphate = dihydroxyacetone phosphate. It participates in carbohydrate biosynthesis; gluconeogenesis. Its pathway is carbohydrate degradation; glycolysis; D-glyceraldehyde 3-phosphate from glycerone phosphate: step 1/1. Involved in the gluconeogenesis. Catalyzes stereospecifically the conversion of dihydroxyacetone phosphate (DHAP) to D-glyceraldehyde-3-phosphate (G3P). The chain is Triosephosphate isomerase from Thiobacillus denitrificans (strain ATCC 25259 / T1).